The primary structure comprises 378 residues: Anhydro-N-acetylmuramic acid kinase (378 aa).

ATP is bound at residue 9 to 16; the sequence is GTSADGID.

Belongs to the anhydro-N-acetylmuramic acid kinase family.

The enzyme catalyses 1,6-anhydro-N-acetyl-beta-muramate + ATP + H2O = N-acetyl-D-muramate 6-phosphate + ADP + H(+). It participates in amino-sugar metabolism; 1,6-anhydro-N-acetylmuramate degradation. The protein operates within cell wall biogenesis; peptidoglycan recycling. In terms of biological role, catalyzes the specific phosphorylation of 1,6-anhydro-N-acetylmuramic acid (anhMurNAc) with the simultaneous cleavage of the 1,6-anhydro ring, generating MurNAc-6-P. Is required for the utilization of anhMurNAc either imported from the medium or derived from its own cell wall murein, and thus plays a role in cell wall recycling. The chain is Anhydro-N-acetylmuramic acid kinase from Synechococcus elongatus (strain ATCC 33912 / PCC 7942 / FACHB-805) (Anacystis nidulans R2).